A 1173-amino-acid chain; its full sequence is DNA-directed RNA polymerase subunit beta (1173 aa).

Residues 1-23 form a disordered region; sequence MEGSLLVASSTSNNETANTASTD. Over residues 8–22 the composition is skewed to low complexity; the sequence is ASSTSNNETANTAST.

It belongs to the RNA polymerase beta chain family. As to quaternary structure, the RNAP catalytic core consists of 2 alpha, 1 beta, 1 beta' and 1 omega subunit. When a sigma factor is associated with the core the holoenzyme is formed, which can initiate transcription.

The enzyme catalyses RNA(n) + a ribonucleoside 5'-triphosphate = RNA(n+1) + diphosphate. DNA-dependent RNA polymerase catalyzes the transcription of DNA into RNA using the four ribonucleoside triphosphates as substrates. This Paenarthrobacter aurescens (strain TC1) protein is DNA-directed RNA polymerase subunit beta.